The sequence spans 682 residues: Probable xyloglucan glycosyltransferase 6 (682 aa).

The next 2 helical transmembrane spans lie at 109–129 (LIKGFLVVVVLLLCFELAAYF) and 173–193 (IVLFLIQSVDRLVLVLGCFWI). Asp260 is an active-site residue. The substrate site is built by Asp319 and Asp321. Asp413 is a catalytic residue. The next 2 helical transmembrane spans lie at 491–511 (LILPFYSFTLFCVILPLTMFF) and 516–536 (LPSWVVCYIPGIMSILNIIPA). Ser608 is subject to Phosphoserine. 2 helical membrane-spanning segments follow: residues 632–651 (LYRTEIALAFILLAASVRSL) and 657–677 (IHFYFLLFQGITFVIVGLDLI).

This sequence belongs to the glycosyltransferase 2 family. Plant cellulose synthase-like C subfamily. In terms of assembly, homodimer. As to expression, mainly expressed in flowers and seeds, and, to a lower extent, in seedlings, roots, leaves and stems.

It localises to the golgi apparatus membrane. In terms of biological role, probable beta-1,4-glucan synthase rather involved in the synthesis of the xyloglucan backbone than cellulose. Seems to work simultaneously with xyloglucan 6-xylosyltransferase. Xyloglucan is a noncellulosic polysaccharides of plant cell wall and consists of a glucan backbone substituted by xylose, galactose and fucose. The chain is Probable xyloglucan glycosyltransferase 6 from Arabidopsis thaliana (Mouse-ear cress).